We begin with the raw amino-acid sequence, 132 residues long: Ribosome-binding factor A (132 aa).

The protein belongs to the RbfA family. Monomer. Binds 30S ribosomal subunits, but not 50S ribosomal subunits or 70S ribosomes.

The protein resides in the cytoplasm. One of several proteins that assist in the late maturation steps of the functional core of the 30S ribosomal subunit. Associates with free 30S ribosomal subunits (but not with 30S subunits that are part of 70S ribosomes or polysomes). Required for efficient processing of 16S rRNA. May interact with the 5'-terminal helix region of 16S rRNA. This is Ribosome-binding factor A from Pseudomonas entomophila (strain L48).